We begin with the raw amino-acid sequence, 325 residues long: Elongation factor P--(R)-beta-lysine ligase (325 aa).

Substrate is bound at residue 76–78 (SPE). Residues 100–102 (RNE) and N109 contribute to the ATP site. Y118 is a binding site for substrate. Residue 244–245 (EL) coordinates ATP. Substrate is bound at residue E251. G300 is an ATP binding site.

The protein belongs to the class-II aminoacyl-tRNA synthetase family. EpmA subfamily. Homodimer.

It catalyses the reaction D-beta-lysine + L-lysyl-[protein] + ATP = N(6)-((3R)-3,6-diaminohexanoyl)-L-lysyl-[protein] + AMP + diphosphate + H(+). Its function is as follows. With EpmB is involved in the beta-lysylation step of the post-translational modification of translation elongation factor P (EF-P). Catalyzes the ATP-dependent activation of (R)-beta-lysine produced by EpmB, forming a lysyl-adenylate, from which the beta-lysyl moiety is then transferred to the epsilon-amino group of a conserved specific lysine residue in EF-P. This is Elongation factor P--(R)-beta-lysine ligase from Pectobacterium carotovorum subsp. carotovorum (strain PC1).